The chain runs to 237 residues: MTNELLYEGKAKRLFKTDEAGVLRVAYKDDATALNGVRKESFAGKGELNNQITSLIFSYLAKEGISSHFIRAISETEQLVKEVSIIPLEVVVRNVMAGSLAKRLGKEEGEEIPNAIVEFYYKDDALDDPFINDDHVLYLDIATTNEMDTIRQAARSINKVLQELFNQMNITLIDFKLEFGRDAAGNILLADEISPDTCRLWDKETNQKLDKDVFRRNIGNLTDVYTEVLNRLKQVQN.

The protein belongs to the SAICAR synthetase family.

The enzyme catalyses 5-amino-1-(5-phospho-D-ribosyl)imidazole-4-carboxylate + L-aspartate + ATP = (2S)-2-[5-amino-1-(5-phospho-beta-D-ribosyl)imidazole-4-carboxamido]succinate + ADP + phosphate + 2 H(+). It functions in the pathway purine metabolism; IMP biosynthesis via de novo pathway; 5-amino-1-(5-phospho-D-ribosyl)imidazole-4-carboxamide from 5-amino-1-(5-phospho-D-ribosyl)imidazole-4-carboxylate: step 1/2. The sequence is that of Phosphoribosylaminoimidazole-succinocarboxamide synthase from Listeria innocua serovar 6a (strain ATCC BAA-680 / CLIP 11262).